The chain runs to 306 residues: N-acetylmuramic acid 6-phosphate etherase (306 aa).

The 164-residue stretch at Thr-59–Lys-222 folds into the SIS domain. Catalysis depends on Glu-87, which acts as the Proton donor. The active site involves Glu-118.

This sequence belongs to the GCKR-like family. MurNAc-6-P etherase subfamily. Homodimer.

The catalysed reaction is N-acetyl-D-muramate 6-phosphate + H2O = N-acetyl-D-glucosamine 6-phosphate + (R)-lactate. Its pathway is amino-sugar metabolism; N-acetylmuramate degradation. Its function is as follows. Specifically catalyzes the cleavage of the D-lactyl ether substituent of MurNAc 6-phosphate, producing GlcNAc 6-phosphate and D-lactate. This Rippkaea orientalis (strain PCC 8801 / RF-1) (Cyanothece sp. (strain PCC 8801)) protein is N-acetylmuramic acid 6-phosphate etherase.